A 428-amino-acid polypeptide reads, in one-letter code: Beta-1,3-galactosyl-O-glycosyl-glycoprotein beta-1,6-N-acetylglucosaminyltransferase (428 aa).

Over 1-9 (MLRTLLRRR) the chain is Cytoplasmic. Positions 5 to 9 (LLRRR) are mediates interaction with GOLPH3 and is necessary and sufficient for localization to the Golgi. Residues 10–32 (LFSYPTKYYFMVLVLSLITFSVL) traverse the membrane as a helical; Signal-anchor for type II membrane protein segment. The tract at residues 33–121 (RIHQKPEFVS…EPLSKEEAEF (89 aa)) is stem region. At 33 to 428 (RIHQKPEFVS…RHKALETLKH (396 aa)) the chain is on the lumenal side. Asn58 and Asn95 each carry an N-linked (GlcNAc...) asparagine glycan. 4 disulfide bridges follow: Cys59/Cys413, Cys100/Cys172, Cys151/Cys199, and Cys372/Cys381. Residues 122-428 (PIAYSIVVHH…RHKALETLKH (307 aa)) form a catalytic region. Residues 128-130 (VVH), 155-157 (DTK), and Tyr187 contribute to the UDP-N-acetyl-alpha-D-glucosamine site. A glycoprotein-binding residues include Glu243, Lys251, Arg254, Glu320, Lys341, and Tyr358. Glu320 functions as the Nucleophile in the catalytic mechanism. 2 residues coordinate UDP-N-acetyl-alpha-D-glucosamine: Arg378 and Lys401.

Belongs to the glycosyltransferase 14 family. Interacts with GOLPH3; may control GCNT1 retention in the Golgi. As to expression, highly expressed in activated T-lymphocytes and myeloid cells.

The protein localises to the golgi apparatus membrane. It catalyses the reaction a 3-O-[beta-D-galactosyl-(1-&gt;3)-N-acetyl-alpha-D-galactosaminyl]-L-seryl-[protein] + UDP-N-acetyl-alpha-D-glucosamine = 3-O-{beta-D-galactosyl-(1-&gt;3)-[N-acetyl-beta-D-glucosaminyl-(1-&gt;6)]-N-acetyl-alpha-D-galactosaminyl}-L-seryl-[protein] + UDP + H(+). The catalysed reaction is a 3-O-[beta-D-galactosyl-(1-&gt;3)-N-acetyl-alpha-D-galactosaminyl]-L-threonyl-[protein] + UDP-N-acetyl-alpha-D-glucosamine = a 3-O-{beta-D-galactosyl-(1-&gt;3)-[N-acetyl-beta-D-glucosaminyl-(1-&gt;6)]-N-acetyl-alpha-D-galactosaminyl}-L-threonyl-[protein] + UDP + H(+). The enzyme catalyses a globoside GalGb4Cer + UDP-N-acetyl-alpha-D-glucosamine = a globoside GlcNAc-(beta1-&gt;6)-GalGb4Cer + UDP + H(+). It carries out the reaction a ganglioside GA1 + UDP-N-acetyl-alpha-D-glucosamine = a ganglioside beta-D-GlcNAc-(1-&gt;6)-GA1 + UDP + H(+). The protein operates within protein modification; protein glycosylation. Its pathway is glycolipid biosynthesis. In terms of biological role, glycosyltransferase that catalyzes the transfer of an N-acetylglucosamine (GlcNAc) moiety in beta1-6 linkage from UDP-GlcNAc onto mucin-type core 1 O-glycan to form the branched mucin-type core 2 O-glycan. The catalysis is metal ion-independent and occurs with inversion of the anomeric configuration of sugar donor. Selectively involved in synthesis of mucin-type core 2 O-glycans that serve as scaffolds for the display of selectin ligand sialyl Lewis X epitope by myeloid cells, with an impact on homeostasis and recruitment to inflammatory sites. Can also act on glycolipid substrates. Transfers GlcNAc moiety to GalGb4Cer globosides in a reaction step to the synthesis of stage-specific embryonic antigen 1 (SSEA-1) determinant. Can use Galbeta1-3GalNAcalpha1- and Galbeta1-3GalNAcbeta1- oligosaccharide derivatives as acceptor substrates. The chain is Beta-1,3-galactosyl-O-glycosyl-glycoprotein beta-1,6-N-acetylglucosaminyltransferase (GCNT1) from Homo sapiens (Human).